Consider the following 248-residue polypeptide: Probable transcriptional regulatory protein BT_2363 (248 aa).

Belongs to the TACO1 family.

It is found in the cytoplasm. The polypeptide is Probable transcriptional regulatory protein BT_2363 (Bartonella tribocorum (strain CIP 105476 / IBS 506)).